The following is a 263-amino-acid chain: Probable ribosomal RNA small subunit methyltransferase A (263 aa).

S-adenosyl-L-methionine-binding residues include L12, G37, E58, D83, and N100.

It belongs to the class I-like SAM-binding methyltransferase superfamily. rRNA adenine N(6)-methyltransferase family. RsmA subfamily.

Its subcellular location is the cytoplasm. Specifically dimethylates two adjacent adenosines in the loop of a conserved hairpin near the 3'-end of 16S rRNA in the 30S particle. May play a critical role in biogenesis of 30S subunits. The sequence is that of Probable ribosomal RNA small subunit methyltransferase A from Methanococcus maripaludis (strain C6 / ATCC BAA-1332).